A 122-amino-acid polypeptide reads, in one-letter code: Small ribosomal subunit protein uS13 (122 aa).

The tract at residues 97–122 (PVRGQKTKSNARTRKGPRPSRIKKKK) is disordered. Residues 101 to 122 (QKTKSNARTRKGPRPSRIKKKK) show a composition bias toward basic residues.

The protein belongs to the universal ribosomal protein uS13 family. Part of the 30S ribosomal subunit. Forms a loose heterodimer with protein S19. Forms two bridges to the 50S subunit in the 70S ribosome.

Its function is as follows. Located at the top of the head of the 30S subunit, it contacts several helices of the 16S rRNA. In the 70S ribosome it contacts the 23S rRNA (bridge B1a) and protein L5 of the 50S subunit (bridge B1b), connecting the 2 subunits; these bridges are implicated in subunit movement. Contacts the tRNAs in the A and P-sites. In Thermosipho melanesiensis (strain DSM 12029 / CIP 104789 / BI429), this protein is Small ribosomal subunit protein uS13.